The following is a 152-amino-acid chain: Ribosome maturation factor RimP (152 aa).

This sequence belongs to the RimP family.

It is found in the cytoplasm. In terms of biological role, required for maturation of 30S ribosomal subunits. The sequence is that of Ribosome maturation factor RimP from Elusimicrobium minutum (strain Pei191).